Consider the following 761-residue polypeptide: Protein spire homolog 1 (761 aa).

Disordered regions lie at residues 1 to 23 (MTDG…ARPE) and 160 to 183 (DCPD…AEVS). Positions 36–223 (LCLEEILTLY…RALYAETKEL (188 aa)) constitute a KIND domain. The span at 160-180 (DCPDEGYEATEEEDEGEEENA) shows a compositional bias: acidic residues. Positions 218 to 246 (AETKELRTFLEKIKSAKENLRKMEGETEE) form a coiled coil. WH2 domains follow at residues 295 to 313 (PYEM…LRKV) and 359 to 376 (LHER…LRPV). Disordered regions lie at residues 375 to 406 (PVSP…DIPD) and 419 to 539 (ANGT…KSLA). A compositionally biased stretch (low complexity) spans 469 to 480 (SSSSISTSLVED). A compositionally biased stretch (basic and acidic residues) spans 504 to 520 (PDKRIAPQRRHSIEKEA). A spir-box region spans residues 557-577 (LTLTVEEVMHIRQVLVKAELE). 2 disordered regions span residues 630 to 694 (PSKP…DELE) and 728 to 761 (STKR…IKEV). The segment covering 636–647 (SLPISSLGPSIL) has biased composition (low complexity). Over residues 682–693 (KHGDRSSSKDEL) the composition is skewed to basic and acidic residues. Positions 728 to 739 (STKRARLHRRTH) are enriched in basic residues. The span at 740–749 (SVYSSSTSSS) shows a compositional bias: low complexity.

This sequence belongs to the spire family.

It is found in the cytoplasm. Its subcellular location is the cytoskeleton. The protein localises to the cytosol. It localises to the cleavage furrow. The protein resides in the perinuclear region. It is found in the cell membrane. Its subcellular location is the cytoplasmic vesicle membrane. Acts as an actin nucleation factor, remains associated with the slow-growing pointed end of the new filament. Involved in intracellular vesicle transport along actin fibers, providing a novel link between actin cytoskeleton dynamics and intracellular transport. Required for asymmetric spindle positioning and asymmetric cell division during meiosis. Required for normal formation of the cleavage furrow and for polar body extrusion during female germ cell meiosis. Also acts in the nucleus: together with FMN2, promotes assembly of nuclear actin filaments in response to DNA damage in order to facilitate movement of chromatin and repair factors after DNA damage. In addition, promotes innate immune signaling downstream of dsRNA sensing. Mechanistically, contributes to IRF3 phosphorylation and activation downstream of MAVS and upstream of TBK1. In Danio rerio (Zebrafish), this protein is Protein spire homolog 1.